The following is a 195-amino-acid chain: Sec-independent protein translocase protein TatB (195 aa).

The helical transmembrane segment at 1-21 (MFDIGFSELALIAVVALVVLG) threads the bilayer. The interval 130 to 195 (EPGSAQPHTP…SSTSPQEKTP (66 aa)) is disordered. 2 stretches are compositionally biased toward low complexity: residues 145–157 (PVVAQAQPMAPAP) and 175–195 (TTHAPTASATASSTSPQEKTP).

It belongs to the TatB family. The Tat system comprises two distinct complexes: a TatABC complex, containing multiple copies of TatA, TatB and TatC subunits, and a separate TatA complex, containing only TatA subunits. Substrates initially bind to the TatABC complex, which probably triggers association of the separate TatA complex to form the active translocon.

The protein resides in the cell inner membrane. In terms of biological role, part of the twin-arginine translocation (Tat) system that transports large folded proteins containing a characteristic twin-arginine motif in their signal peptide across membranes. Together with TatC, TatB is part of a receptor directly interacting with Tat signal peptides. TatB may form an oligomeric binding site that transiently accommodates folded Tat precursor proteins before their translocation. In Xanthomonas campestris pv. campestris (strain 8004), this protein is Sec-independent protein translocase protein TatB.